Reading from the N-terminus, the 209-residue chain is Putative AgrB-like protein (209 aa).

5 consecutive transmembrane segments (helical) span residues 49–71 (ILFL…AAFG), 82–102 (AKNS…GAYL), 105–125 (YLLF…LLLF), 149–169 (QAVL…DELI), and 173–193 (ISLS…KVLG).

The protein belongs to the AgrB family.

Its subcellular location is the cell membrane. Functionally, may be involved in the proteolytic processing of a quorum sensing system signal molecule precursor. In Clostridium acetobutylicum (strain ATCC 824 / DSM 792 / JCM 1419 / IAM 19013 / LMG 5710 / NBRC 13948 / NRRL B-527 / VKM B-1787 / 2291 / W), this protein is Putative AgrB-like protein.